The following is a 318-amino-acid chain: Porphobilinogen deaminase (318 aa).

Position 241 is an S-(dipyrrolylmethanemethyl)cysteine (C241).

This sequence belongs to the HMBS family. In terms of assembly, monomer. The cofactor is dipyrromethane.

It carries out the reaction 4 porphobilinogen + H2O = hydroxymethylbilane + 4 NH4(+). It functions in the pathway porphyrin-containing compound metabolism; protoporphyrin-IX biosynthesis; coproporphyrinogen-III from 5-aminolevulinate: step 2/4. Functionally, tetrapolymerization of the monopyrrole PBG into the hydroxymethylbilane pre-uroporphyrinogen in several discrete steps. The sequence is that of Porphobilinogen deaminase from Geotalea uraniireducens (strain Rf4) (Geobacter uraniireducens).